The chain runs to 516 residues: L-amino acid oxidase (516 aa).

Positions 1–18 (MNVFFMFSLLFLAALESC) are cleaved as a signal peptide. FAD-binding positions include 61–62 (MS), 81–82 (EA), R89, and 105–108 (GPMR). Residue R108 coordinates substrate. An N-linked (GlcNAc...) asparagine glycan is attached at N190. FAD is bound at residue V279. N-linked (GlcNAc...) asparagine glycans are attached at residues N299 and N404. A disulfide bond links C349 and C430. FAD-binding positions include E475 and 482–487 (GWIDST). A substrate-binding site is contributed by 482 to 483 (GW).

Belongs to the flavin monoamine oxidase family. FIG1 subfamily. Homodimer; non-covalently linked. FAD is required as a cofactor. In terms of processing, N-glycosylated (14%). The enzymatic activity remains unchanged after deglycosylation. Expressed by the venom gland.

The protein resides in the secreted. The enzyme catalyses an L-alpha-amino acid + O2 + H2O = a 2-oxocarboxylate + H2O2 + NH4(+). It carries out the reaction L-leucine + O2 + H2O = 4-methyl-2-oxopentanoate + H2O2 + NH4(+). The catalysed reaction is L-phenylalanine + O2 + H2O = 3-phenylpyruvate + H2O2 + NH4(+). It catalyses the reaction L-tryptophan + O2 + H2O = indole-3-pyruvate + H2O2 + NH4(+). The enzyme catalyses L-methionine + O2 + H2O = 4-methylsulfanyl-2-oxobutanoate + H2O2 + NH4(+). It carries out the reaction L-isoleucine + O2 + H2O = (S)-3-methyl-2-oxopentanoate + H2O2 + NH4(+). Inhibited by the substrate analog N-acetyl tryptophan. Functionally, catalyzes an oxidative deamination of predominantly hydrophobic and aromatic L-amino acids, thus producing hydrogen peroxide that may contribute to the diverse toxic effects of this enzyme. Is highly active on L-Met&gt;L-Leu&gt;L-Phe&gt;L-Trp=L-Ile. Binds to the cell surface and enables the production of highly localized concentration of hydrogen peroxide in or near the binding interfaces. Does not bind to phospholipids. Induces platelet-rich plasma aggregation, shows cytotoxic effects on some cancer cell lines (B16-F10 (mouse melanoma), PC12 (rat pheochromocytoma), MCF-7 and MDA-MB-231 (human breast carcinoma)) and shows antibacterial activities against both Gram-positive and Gram-negative bacteria. Also exhibits hemorrhage and edema. Does not show cytotoxicity on erythrocytes and peripheral blood mononuclear cells. Its effect on platelets is controversial, since it either induces aggregation or inhibits agonist-induced aggregation. These different effects are probably due to different experimental conditions. In Cerastes cerastes (Horned desert viper), this protein is L-amino acid oxidase.